Reading from the N-terminus, the 235-residue chain is Protein C1orf43 homolog (235 aa).

A helical membrane pass occupies residues V11–V31.

The protein localises to the membrane. It localises to the golgi apparatus. The protein resides in the mitochondrion. In terms of biological role, general regulator of phagocytosis. Required to uptake Gram negative bacterium by macrophages. This chain is Protein C1orf43 homolog, found in Rattus norvegicus (Rat).